Consider the following 664-residue polypeptide: ATP synthase subunit alpha 2 (664 aa).

180–187 (GDRATGKT) is an ATP binding site. A disordered region spans residues 525-664 (MPAEDAAGDI…DAEAEARHKR (140 aa)). The segment covering 543-588 (ARGDADRDADHGANREVSREVSPEASREVSREVSCEVSHEADRDAA) has biased composition (basic and acidic residues). Over residues 589–599 (ADAARVAGRAP) the composition is skewed to low complexity. Over residues 621-639 (ADGDRASASRPRPDARGDA) the composition is skewed to basic and acidic residues.

It belongs to the ATPase alpha/beta chains family. As to quaternary structure, F-type ATPases have 2 components, CF(1) - the catalytic core - and CF(0) - the membrane proton channel. CF(1) has five subunits: alpha(3), beta(3), gamma(1), delta(1), epsilon(1). CF(0) has three main subunits: a(1), b(2) and c(9-12). The alpha and beta chains form an alternating ring which encloses part of the gamma chain. CF(1) is attached to CF(0) by a central stalk formed by the gamma and epsilon chains, while a peripheral stalk is formed by the delta and b chains.

It is found in the cell inner membrane. The enzyme catalyses ATP + H2O + 4 H(+)(in) = ADP + phosphate + 5 H(+)(out). Functionally, produces ATP from ADP in the presence of a proton gradient across the membrane. The alpha chain is a regulatory subunit. This chain is ATP synthase subunit alpha 2, found in Burkholderia pseudomallei (strain 1710b).